The following is a 115-amino-acid chain: ATP synthase subunit g, mitochondrial (115 aa).

An N-acetylmethionine modification is found at Met-1. Residues Ser-3 and Ser-62 each carry the phosphoserine modification.

Belongs to the ATPase g subunit family. As to quaternary structure, F-type ATPases have 2 components, CF(1) - the catalytic core - and CF(0) - the membrane proton channel. In yeast, the dimeric form of ATP synthase consists of 17 polypeptides: alpha, beta, gamma, delta, epsilon, 4 (B), 5 (OSCP), 6 (A), 8, 9 (C), d, E (Tim11), f, g, h, i/j and k. In terms of processing, phosphorylation on Ser-62 impairs ATP synthase dimerization.

It is found in the mitochondrion membrane. Functionally, mitochondrial membrane ATP synthase (F(1)F(0) ATP synthase or Complex V) produces ATP from ADP in the presence of a proton gradient across the membrane which is generated by electron transport complexes of the respiratory chain. F-type ATPases consist of two structural domains, F(1) - containing the extramembraneous catalytic core, and F(0) - containing the membrane proton channel, linked together by a central stalk and a peripheral stalk. During catalysis, ATP synthesis in the catalytic domain of F(1) is coupled via a rotary mechanism of the central stalk subunits to proton translocation. Part of the complex F(0) domain. Minor subunit located with subunit a in the membrane. The protein is ATP synthase subunit g, mitochondrial (ATP20) of Saccharomyces cerevisiae (strain ATCC 204508 / S288c) (Baker's yeast).